The chain runs to 408 residues: Cytochrome bc1 complex Rieske iron-sulfur subunit (408 aa).

3 helical membrane-spanning segments follow: residues valine 56–phenylalanine 76, methionine 98–valine 118, and leucine 166–isoleucine 186. Residues histidine 293–isoleucine 390 enclose the Rieske domain. Cysteine 333, histidine 335, cysteine 352, and histidine 355 together coordinate [2Fe-2S] cluster. Cysteine 338 and cysteine 354 form a disulfide bridge.

This sequence belongs to the Rieske iron-sulfur protein family. In terms of assembly, the cytochrome bc1 complex is composed of a cytochrome b (QcrB), the Rieske iron-sulfur protein (QcrA) and a diheme cytochrome c (QcrC) subunit. The bc1 complex forms a supercomplex with cytochrome c oxidase (cytochrome aa3). Requires [2Fe-2S] cluster as cofactor.

Its subcellular location is the cell membrane. Functionally, iron-sulfur subunit of the cytochrome bc1 complex, an essential component of the respiratory electron transport chain required for ATP synthesis. The bc1 complex catalyzes the oxidation of menaquinol and the reduction of cytochrome c in the respiratory chain. The bc1 complex operates through a Q-cycle mechanism that couples electron transfer to generation of the proton gradient that drives ATP synthesis. The polypeptide is Cytochrome bc1 complex Rieske iron-sulfur subunit (qcrA) (Corynebacterium efficiens (strain DSM 44549 / YS-314 / AJ 12310 / JCM 11189 / NBRC 100395)).